The following is a 243-amino-acid chain: Small ribosomal subunit protein uS3 (243 aa).

Positions 22–93 constitute a KH type-2 domain; the sequence is LNEFLTRELA…SVELYAEKVA (72 aa). Residues 195-243 are disordered; it reads QQGKNGPKKPQPDHILVTEPKDEPAPLEPTSDIRSLAPAPLPQPVAAVA.

This sequence belongs to the universal ribosomal protein uS3 family.

The protein is Small ribosomal subunit protein uS3 (RpS3) of Manduca sexta (Tobacco hawkmoth).